The primary structure comprises 206 residues: 7-methyl-GTP pyrophosphatase (206 aa).

D82 acts as the Proton acceptor in catalysis.

Belongs to the Maf family. YceF subfamily. It depends on a divalent metal cation as a cofactor.

Its subcellular location is the cytoplasm. It catalyses the reaction N(7)-methyl-GTP + H2O = N(7)-methyl-GMP + diphosphate + H(+). In terms of biological role, nucleoside triphosphate pyrophosphatase that hydrolyzes 7-methyl-GTP (m(7)GTP). May have a dual role in cell division arrest and in preventing the incorporation of modified nucleotides into cellular nucleic acids. The protein is 7-methyl-GTP pyrophosphatase of Shewanella denitrificans (strain OS217 / ATCC BAA-1090 / DSM 15013).